A 417-amino-acid chain; its full sequence is NADH-quinone oxidoreductase subunit D (417 aa).

It belongs to the complex I 49 kDa subunit family. In terms of assembly, NDH-1 is composed of 14 different subunits. Subunits NuoB, C, D, E, F, and G constitute the peripheral sector of the complex.

The protein localises to the cell inner membrane. The catalysed reaction is a quinone + NADH + 5 H(+)(in) = a quinol + NAD(+) + 4 H(+)(out). NDH-1 shuttles electrons from NADH, via FMN and iron-sulfur (Fe-S) centers, to quinones in the respiratory chain. The immediate electron acceptor for the enzyme in this species is believed to be ubiquinone. Couples the redox reaction to proton translocation (for every two electrons transferred, four hydrogen ions are translocated across the cytoplasmic membrane), and thus conserves the redox energy in a proton gradient. The protein is NADH-quinone oxidoreductase subunit D of Dechloromonas aromatica (strain RCB).